Reading from the N-terminus, the 106-residue chain is MESAGIQQLLAAEREAQQIVNAARTAKMTRLKQAKEEAETEVAEHKTSTEQGFQRKLEATSGDSGANVKRLEQETDAKIEQLKNEATRISKDVVDMLLKNVTTVNN.

N-acetylmethionine is present on methionine 1. The tract at residues 31–67 is disordered; sequence LKQAKEEAETEVAEHKTSTEQGFQRKLEATSGDSGAN. The span at 33 to 58 shows a compositional bias: basic and acidic residues; that stretch reads QAKEEAETEVAEHKTSTEQGFQRKLE.

The protein belongs to the V-ATPase G subunit family. In terms of assembly, V-ATPase is a heteromultimeric enzyme composed of a peripheral catalytic V1 complex (components A to H) attached to an integral membrane V0 proton pore complex (components: a, c, c'', d and e).

The protein localises to the vacuole membrane. Functionally, catalytic subunit of the peripheral V1 complex of vacuolar ATPase (V-ATPase). V-ATPase is responsible for acidifying a variety of intracellular compartments in eukaryotic cells. The chain is V-type proton ATPase subunit G2 (VHA-G2) from Arabidopsis thaliana (Mouse-ear cress).